Consider the following 340-residue polypeptide: DnaJ homolog subfamily B member 1 (340 aa).

The J domain occupies 2–70; it reads GKDYYQTLGL…REIFDRYGEE (69 aa). The segment at 68-90 is disordered; that stretch reads GEEGLKGSGPSGGSSGGTNGTSF. The span at 73–86 shows a compositional bias: gly residues; that stretch reads KGSGPSGGSSGGTN. Thr307 carries the phosphothreonine modification.

In terms of assembly, interacts with DNAJC3. Interacts with HSF1 (via transactivation domain); this interaction results in the inhibition of heat shock- and HSF1-induced transcriptional activity during the attenuation and recovery phase period of the heat shock response. Interacts with BAG3.

The protein localises to the cytoplasm. It localises to the nucleus. The protein resides in the nucleolus. Functionally, interacts with HSP70 and can stimulate its ATPase activity. Stimulates the association between HSC70 and HIP. Negatively regulates heat shock-induced HSF1 transcriptional activity during the attenuation and recovery phase period of the heat shock response. Stimulates ATP hydrolysis and the folding of unfolded proteins mediated by HSPA1A/B (in vitro). This is DnaJ homolog subfamily B member 1 (DNAJB1) from Bos taurus (Bovine).